Consider the following 470-residue polypeptide: Argininosuccinate lyase (470 aa).

The protein belongs to the lyase 1 family. Argininosuccinate lyase subfamily.

The protein resides in the cytoplasm. The catalysed reaction is 2-(N(omega)-L-arginino)succinate = fumarate + L-arginine. The protein operates within amino-acid biosynthesis; L-arginine biosynthesis; L-arginine from L-ornithine and carbamoyl phosphate: step 3/3. The protein is Argininosuccinate lyase of Leptospira interrogans serogroup Icterohaemorrhagiae serovar copenhageni (strain Fiocruz L1-130).